The following is a 514-amino-acid chain: MSLTEEIKKRRTFAIISHPDAGKTTITEQLLYFGGEIREAGTVKGKKSGTFAKSDWMDIEKQRGISVTSSVMQFDYAGKRVNILDTPGHEDFSEDTYRTLMAVDAAIMVVDSAKGIEAQTKKLFEVVKHRNIPVFTFINKLDRDGREPLELLEELEEVLGIASYPMNWPIGMGRAFEGLYDLHNKRLELYKGDERFASIEDGDQLFANNPFYEQVKEDIELLQEAGNDFSEQAILDGDLTPVFFGSALTNFGVQTFLDTFLEFAPEPHGHKTTEGNVVDPLAKDFSGFVFKIQANMDPKHRDRIAFVRIVSGEFERGMGVNLTRTGKGAKLSNVTQFMAESRENVTNAVAGDIIGVYDTGTYQVGDTLTVGKNKFEFEPLPTFTPEIFMKVSPKNVMKQKSFHKGIEQLVQEGAIQLYKNYQTGEYMLGAVGQLQFEVFKHRMEGEYNAEVVMTPMGKKTVRWISEDDLDQRMSSSRNILAKDRFDQPVFLFENDFALRWFADKYPDVTLEEKM.

Positions 8 to 268 constitute a tr-type G domain; that stretch reads KKRRTFAIIS…TFLEFAPEPH (261 aa). GTP is bound by residues 17–24, 85–89, and 139–142; these read SHPDAGKT, DTPGH, and NKLD.

The protein belongs to the TRAFAC class translation factor GTPase superfamily. Classic translation factor GTPase family. PrfC subfamily.

The protein localises to the cytoplasm. Its function is as follows. Increases the formation of ribosomal termination complexes and stimulates activities of RF-1 and RF-2. It binds guanine nucleotides and has strong preference for UGA stop codons. It may interact directly with the ribosome. The stimulation of RF-1 and RF-2 is significantly reduced by GTP and GDP, but not by GMP. This chain is Peptide chain release factor 3, found in Streptococcus pyogenes serotype M2 (strain MGAS10270).